The chain runs to 177 residues: Large ribosomal subunit protein uL6 (177 aa).

Basic and acidic residues predominate over residues 152 to 171; the sequence is RPPEPYKGKGVRYDDEEVRR. Positions 152 to 177 are disordered; the sequence is RPPEPYKGKGVRYDDEEVRRKEAKKK.

It belongs to the universal ribosomal protein uL6 family. As to quaternary structure, part of the 50S ribosomal subunit.

Functionally, this protein binds to the 23S rRNA, and is important in its secondary structure. It is located near the subunit interface in the base of the L7/L12 stalk, and near the tRNA binding site of the peptidyltransferase center. The chain is Large ribosomal subunit protein uL6 from Shewanella sp. (strain MR-4).